The chain runs to 790 residues: Cadherin-6 (790 aa).

An N-terminal signal peptide occupies residues 1–18 (MRTYRYFLLLFWVGQPYP). Residues 19–53 (TFSTPLSKRTSGFPAKKRTLELSGNSKNELSRSKR) constitute a propeptide that is removed on maturation. Cadherin domains follow at residues 54 to 159 (SWMW…EPIF), 160 to 268 (TKEV…PPRF), 269 to 383 (PQST…PPVF), 384 to 486 (SKLA…DNPP), and 487 to 608 (EFAE…LVHP). Residues 54–615 (SWMWNQFFLL…VHPTGLSTGA (562 aa)) lie on the Extracellular side of the membrane. N255 is a glycosylation site (N-linked (GlcNAc...) asparagine). The interval 261-291 (VNDNPPRFPQSTYQFKTPESSPPGTPIGRIK) is disordered. The span at 269–279 (PQSTYQFKTPE) shows a compositional bias: polar residues. 4 N-linked (GlcNAc...) asparagine glycosylation sites follow: N399, N437, N455, and N536. The chain crosses the membrane as a helical span at residues 616-636 (LIAILLCIVTLLVTVVLFAAL). Residues 637 to 790 (RRQRKKEPLI…YGGVDSDKDS (154 aa)) are Cytoplasmic-facing. Phosphoserine is present on residues S786 and S790.

The protein localises to the cell membrane. Cadherins are calcium-dependent cell adhesion proteins. They preferentially interact with themselves in a homophilic manner in connecting cells; cadherins may thus contribute to the sorting of heterogeneous cell types. The protein is Cadherin-6 (CDH6) of Bos taurus (Bovine).